The following is a 661-amino-acid chain: Cyclic di-GMP phosphodiesterase PdeR (661 aa).

The 71-residue stretch at 109–179 (GLSFAEQVVS…RRNNRVFFRS (71 aa)) folds into the PAS domain. The 133-residue stretch at 265 to 397 (NKVGVVYLDL…GRGQFCVFTP (133 aa)) folds into the GGDEF domain. Residues 406–658 (YLWLDTNLRK…AFERWYKRYL (253 aa)) form the EAL domain.

In terms of assembly, interacts with DgcM and MlrA.

It catalyses the reaction 3',3'-c-di-GMP + H2O = 5'-phosphoguanylyl(3'-&gt;5')guanosine + H(+). In terms of biological role, part of a signaling cascade that regulates curli biosynthesis. The cascade is composed of two cyclic-di-GMP (c-di-GMP) control modules, in which c-di-GMP controlled by the DgcE/PdeH pair (module I) regulates the activity of the DgcM/PdeR pair (module II), which in turn regulates activity of the transcription factor MlrA and expression of the master biofilm regulator csgD. PdeR acts as a trigger enzyme that connects modules I and II. It inhibits DgcM and MlrA by direct interaction. Inhibition is relieved when PdeR binds and degrades c-di-GMP generated by module I. In Escherichia coli (strain K12), this protein is Cyclic di-GMP phosphodiesterase PdeR.